Reading from the N-terminus, the 238-residue chain is Small ribosomal subunit protein uS2c (238 aa).

The protein belongs to the universal ribosomal protein uS2 family.

The protein localises to the plastid. The protein resides in the chloroplast. The chain is Small ribosomal subunit protein uS2c (rps2) from Jasminum nudiflorum (Winter jasmine).